We begin with the raw amino-acid sequence, 154 residues long: Myoglobin (154 aa).

One can recognise a Globin domain in the interval G2 to K148. The residue at position 4 (S4) is a Phosphoserine. H65 is a nitrite binding site. H65 is an O2 binding site. T68 carries the post-translational modification Phosphothreonine. H94 is a binding site for heme b.

This sequence belongs to the globin family. In terms of assembly, monomeric.

Its subcellular location is the cytoplasm. It localises to the sarcoplasm. It carries out the reaction Fe(III)-heme b-[protein] + nitric oxide + H2O = Fe(II)-heme b-[protein] + nitrite + 2 H(+). The catalysed reaction is H2O2 + AH2 = A + 2 H2O. Functionally, monomeric heme protein which primary function is to store oxygen and facilitate its diffusion within muscle tissues. Reversibly binds oxygen through a pentacoordinated heme iron and enables its timely and efficient release as needed during periods of heightened demand. Depending on the oxidative conditions of tissues and cells, and in addition to its ability to bind oxygen, it also has a nitrite reductase activity whereby it regulates the production of bioactive nitric oxide. Under stress conditions, like hypoxia and anoxia, it also protects cells against reactive oxygen species thanks to its pseudoperoxidase activity. The sequence is that of Myoglobin (MB) from Gorilla gorilla beringei (Mountain gorilla).